A 118-amino-acid chain; its full sequence is Large ribosomal subunit protein bL20 (118 aa).

The protein belongs to the bacterial ribosomal protein bL20 family.

Functionally, binds directly to 23S ribosomal RNA and is necessary for the in vitro assembly process of the 50S ribosomal subunit. It is not involved in the protein synthesizing functions of that subunit. The protein is Large ribosomal subunit protein bL20 of Lactobacillus acidophilus (strain ATCC 700396 / NCK56 / N2 / NCFM).